The chain runs to 180 residues: Bifunctional bis(5'-adenosyl)-triphosphatase/adenylylsulfatase FHIT (180 aa).

In terms of domain architecture, HIT spans 27–134 (SYAFGPYKID…LPRKGGDFEK (108 aa)). Positions 52 and 108 each coordinate substrate. The Histidine triad motif motif lies at 119-123 (HVHIH). Histidine 121 functions as the Tele-AMP-histidine intermediate in the catalytic mechanism. Histidine 123 is a substrate binding site.

It carries out the reaction P(1),P(3)-bis(5'-adenosyl) triphosphate + H2O = AMP + ADP + 2 H(+). The catalysed reaction is adenosine 5'-phosphosulfate + H2O = sulfate + AMP + 2 H(+). It catalyses the reaction adenosine 5'-phosphosulfate + NH4(+) = adenosine 5'-phosphoramidate + sulfate + 2 H(+). The enzyme catalyses adenosine 5'-phosphoramidate + H2O = AMP + NH4(+). Possesses dinucleoside triphosphate hydrolase activity. Cleaves P(1)-P(3)-bis(5'-adenosyl) triphosphate (Ap3A) to yield AMP and ADP. Exhibits adenylylsulfatase activity, hydrolyzing adenosine 5'-phosphosulfate to yield AMP and sulfate. Exhibits adenosine 5'-monophosphoramidase activity, hydrolyzing purine nucleotide phosphoramidates with a single phosphate group such as adenosine 5'monophosphoramidate (AMP-NH2) to yield AMP and NH2. Exhibits adenylylsulfate-ammonia adenylyltransferase, catalyzing the ammonolysis of adenosine 5'-phosphosulfate resulting in the formation of adenosine 5'-phosphoramidate. This chain is Bifunctional bis(5'-adenosyl)-triphosphatase/adenylylsulfatase FHIT, found in Arabidopsis thaliana (Mouse-ear cress).